The following is a 353-amino-acid chain: Photosystem II D2 protein (353 aa).

An N-acetylthreonine modification is found at Thr-2. Position 2 is a phosphothreonine (Thr-2). Residues 41–61 traverse the membrane as a helical segment; that stretch reads CAYFAIGGWFTGTTFVTSWYT. Chlorophyll a is bound at residue His-118. Residues 125 to 141 traverse the membrane as a helical segment; the sequence is GFMLRQFELARSVQLRP. Residues Gln-130 and Asn-143 each contribute to the pheophytin a site. The chain crosses the membrane as a helical span at residues 153–166; that stretch reads VFVSVFLIYPLGQS. Position 198 (His-198) interacts with chlorophyll a. The chain crosses the membrane as a helical span at residues 208 to 228; that stretch reads AALLCAIHGATVENTLFEDGD. Residues His-215 and Phe-262 each contribute to the a plastoquinone site. Residue His-215 coordinates Fe cation. His-269 is a binding site for Fe cation. A helical membrane pass occupies residues 279–295; it reads GLWMSALGVVGLALNLR.

Belongs to the reaction center PufL/M/PsbA/D family. PSII is composed of 1 copy each of membrane proteins PsbA, PsbB, PsbC, PsbD, PsbE, PsbF, PsbH, PsbI, PsbJ, PsbK, PsbL, PsbM, PsbT, PsbX, PsbY, PsbZ, Psb30/Ycf12, at least 3 peripheral proteins of the oxygen-evolving complex and a large number of cofactors. It forms dimeric complexes. It depends on The D1/D2 heterodimer binds P680, chlorophylls that are the primary electron donor of PSII, and subsequent electron acceptors. It shares a non-heme iron and each subunit binds pheophytin, quinone, additional chlorophylls, carotenoids and lipids. There is also a Cl(-1) ion associated with D1 and D2, which is required for oxygen evolution. The PSII complex binds additional chlorophylls, carotenoids and specific lipids. as a cofactor.

The protein resides in the plastid. The protein localises to the chloroplast thylakoid membrane. The enzyme catalyses 2 a plastoquinone + 4 hnu + 2 H2O = 2 a plastoquinol + O2. Its function is as follows. Photosystem II (PSII) is a light-driven water:plastoquinone oxidoreductase that uses light energy to abstract electrons from H(2)O, generating O(2) and a proton gradient subsequently used for ATP formation. It consists of a core antenna complex that captures photons, and an electron transfer chain that converts photonic excitation into a charge separation. The D1/D2 (PsbA/PsbD) reaction center heterodimer binds P680, the primary electron donor of PSII as well as several subsequent electron acceptors. D2 is needed for assembly of a stable PSII complex. In Carica papaya (Papaya), this protein is Photosystem II D2 protein.